The chain runs to 317 residues: Ribonuclease 3-like protein 2 (317 aa).

The tract at residues 1–26 (MAPPPAMKPASRKRGPPAPDPVELPP) is disordered. Residues 16–26 (PPAPDPVELPP) show a composition bias toward pro residues. The 149-residue stretch at 37–185 (AARVERLLRY…IAAAVYVDCK (149 aa)) folds into the RNase III domain. Mg(2+)-binding residues include Glu74, Asp171, and Glu174. A DRBM domain is found at 211–274 (QPVTMLHELC…ARDATRKLAG (64 aa)).

The cofactor is Mg(2+). Mn(2+) serves as cofactor.

Its function is as follows. Cleaves double-stranded RNA (dsRNA). This is Ribonuclease 3-like protein 2 from Oryza sativa subsp. japonica (Rice).